A 468-amino-acid polypeptide reads, in one-letter code: Interleukin-6 receptor subunit alpha (468 aa).

The first 19 residues, 1-19 (MLAVGCALLAALLAAPGAA), serve as a signal peptide directing secretion. The Extracellular portion of the chain corresponds to 20-365 (LAPRRCPAQE…VQDSSSVPLP (346 aa)). 4 cysteine pairs are disulfide-bonded: Cys25/Cys193, Cys47/Cys96, Cys121/Cys132, and Cys165/Cys176. One can recognise an Ig-like C2-type domain in the interval 26–112 (PAQEVARGVL…AGTVHLLVDV (87 aa)). N-linked (GlcNAc...) asparagine glycosylation is found at Asn55 and Asn93. 2 Fibronectin type-III domains span residues 113–217 (PPEE…LQPD) and 218–316 (PPAN…TPWT). 2 N-linked (GlcNAc...) asparagine glycosylation sites follow: Asn221 and Asn245. The WSXWS motif motif lies at 303-307 (WSEWS). The segment at 303–328 (WSEWSPEAMGTPWTESRSPPAENEVS) is disordered. A glycan (N-linked (GlcNAc...) asparagine) is linked at Asn350. Thr352 carries O-linked (GlcNAc) threonine glycosylation. Residues 366-386 (TFLVAGGSLAFGTLLCIAIVL) form a helical membrane-spanning segment. The Cytoplasmic portion of the chain corresponds to 387–468 (RFKKTWKLRA…ISNTDYFFPR (82 aa)). Positions 421 to 433 (TPVLVPLISPPVS) are enriched in pro residues. The disordered stretch occupies residues 421–468 (TPVLVPLISPPVSPSSLGSDNTSSHNRPDARDPRSPYDISNTDYFFPR). The segment covering 446–455 (NRPDARDPRS) has biased composition (basic and acidic residues). The span at 458-468 (DISNTDYFFPR) shows a compositional bias: polar residues.

It belongs to the type I cytokine receptor family. Type 3 subfamily. In terms of assembly, component of a hexamer of two molecules each of IL6, IL6R and IL6ST; first binds to IL6 to associate with the signaling subunit IL6ST. Interacts (via N-terminal ectodomain) with SORL1; this interaction may affect IL6-binding to IL6R, hence decrease IL6 'classic-signaling'. Also interacts with SORL1; this interaction leads to soluble IL6R internalization. May form a trimeric complex with the soluble SORL1 ectodomain and circulating IL6 receptor; this interaction might stabilize circulating IL6, hence promote IL6 'trans-signaling,. A short soluble form is released from the membrane by proteolysis. The sIL6R is formed mostly by limited proteolysis of membrane-bound receptors, a process referred to as ectodomain shedding, but is also directly secreted from the cells after alternative mRNA splicing. mIL6R is cleaved by the proteases ADAM10 and ADAM17. In terms of processing, glycosylated. Glycosylation is dispensable for transport, signaling, and cell-surface turnover. Glycosylation at Asn-55 is a protease-regulatory exosite. Glycosylation is required for ADAM17-mediated proteolysis. Expressed in peripheral blood mononuclear cells and weakly found in urine and serum. 1%-20% of the total sIL6R in plasma is generated by alternative splicing.

The protein resides in the cell membrane. It is found in the secreted. Classic and trans-signaling are both inhibited by tocilizumab, a humanized monoclonal antibody that blocks interleukin IL6R signaling. In terms of biological role, part of the receptor for interleukin 6. Binds to IL6 with low affinity, but does not transduce a signal. Signal activation necessitate an association with IL6ST. Activation leads to the regulation of the immune response, acute-phase reactions and hematopoiesis. The interaction with membrane-bound IL6R and IL6ST stimulates 'classic signaling', the restricted expression of the IL6R limits classic IL6 signaling to only a few tissues such as the liver and some cells of the immune system. Whereas the binding of IL6 and soluble IL6R to IL6ST stimulates 'trans-signaling'. Alternatively, 'cluster signaling' occurs when membrane-bound IL6:IL6R complexes on transmitter cells activate IL6ST receptors on neighboring receiver cells. Signaling via the membrane-bound IL6R is mostly regenerative and anti-inflammatory. Drives naive CD4(+) T cells to the Th17 lineage, through 'cluster signaling' by dendritic cells. Functionally, soluble form of IL6 receptor (sIL6R) that acts as an agonist of IL6 activity. The IL6:sIL6R complex (hyper-IL6) binds to IL6ST/gp130 on cell surfaces and induces signaling also on cells that do not express membrane-bound IL6R in a process called IL6 'trans-signaling'. sIL6R is causative for the pro-inflammatory properties of IL6 and an important player in the development of chronic inflammatory diseases. In complex with IL6, is required for induction of VEGF production. Plays a protective role during liver injury, being required for maintenance of tissue regeneration. 'Trans-signaling' in central nervous system regulates energy and glucose homeostasis. In Homo sapiens (Human), this protein is Interleukin-6 receptor subunit alpha.